Consider the following 276-residue polypeptide: Rhomboid protease GlpG (276 aa).

Helical transmembrane passes span 94–114 (GPVT…MQIL), 142–162 (ALMH…WYLG), 169–189 (LGSG…GYVQ), 192–212 (FSGP…GYVW), 229–249 (LIIF…GMSM), and 250–270 (ANGA…VDSL). Ser-201 functions as the Nucleophile in the catalytic mechanism. His-254 is a catalytic residue.

The protein belongs to the peptidase S54 family.

Its subcellular location is the cell inner membrane. The catalysed reaction is Cleaves type-1 transmembrane domains using a catalytic dyad composed of serine and histidine that are contributed by different transmembrane domains.. Rhomboid-type serine protease that catalyzes intramembrane proteolysis. In Shigella boydii serotype 4 (strain Sb227), this protein is Rhomboid protease GlpG.